A 243-amino-acid polypeptide reads, in one-letter code: MKIDFLTLFPEMFEGVLGSSILQKAQDKDAVRFRVVNFRAYSDNKHQTVDDYPYGGGAGMVLKPQPVFDAVEKLTAEAGGSPRIILVCPQGERYTQQKAEELAREEHLMFICGHYEGYDERIREHLSTDEISIGDFVLTGGELPAMMIADSVVRLLPGVLGKEESHLEDSFSTGLLEHPHYTRPADYKGLKVPDVLTSGNHAKIKEWRRKESLRRTFLRRPDLLENYPLSEEERKWISEWKNR.

S-adenosyl-L-methionine-binding positions include Gly-113 and 133-138 (IGDFVL).

This sequence belongs to the RNA methyltransferase TrmD family. As to quaternary structure, homodimer.

The protein resides in the cytoplasm. It catalyses the reaction guanosine(37) in tRNA + S-adenosyl-L-methionine = N(1)-methylguanosine(37) in tRNA + S-adenosyl-L-homocysteine + H(+). Functionally, specifically methylates guanosine-37 in various tRNAs. The protein is tRNA (guanine-N(1)-)-methyltransferase of Bacillus licheniformis (strain ATCC 14580 / DSM 13 / JCM 2505 / CCUG 7422 / NBRC 12200 / NCIMB 9375 / NCTC 10341 / NRRL NRS-1264 / Gibson 46).